We begin with the raw amino-acid sequence, 159 residues long: Phosphopantetheine adenylyltransferase (159 aa).

Ser-8 is a substrate binding site. ATP contacts are provided by residues 8 to 9 and His-16; that span reads SF. Substrate contacts are provided by Lys-40, Val-72, and Arg-86. ATP is bound by residues 87–89, Glu-97, and 122–128; these read GVR and YAALRSS.

Belongs to the bacterial CoaD family. In terms of assembly, homohexamer. Requires Mg(2+) as cofactor.

It localises to the cytoplasm. The catalysed reaction is (R)-4'-phosphopantetheine + ATP + H(+) = 3'-dephospho-CoA + diphosphate. It functions in the pathway cofactor biosynthesis; coenzyme A biosynthesis; CoA from (R)-pantothenate: step 4/5. Functionally, reversibly transfers an adenylyl group from ATP to 4'-phosphopantetheine, yielding dephospho-CoA (dPCoA) and pyrophosphate. The chain is Phosphopantetheine adenylyltransferase from Treponema pallidum (strain Nichols).